A 141-amino-acid chain; its full sequence is ER membrane protein complex subunit 5 (141 aa).

Over 1–6 the chain is Cytoplasmic; sequence MSFVSK. A helical transmembrane segment spans residues 7–27; that stretch reads LLYTVSALVLFHSGFSSYEFH. Residues 28–48 lie on the Lumenal side of the membrane; sequence HLLKLNSLNNAQGAISKLPKD. Residues 49–69 form a helical membrane-spanning segment; that stretch reads IMYETYAGLILFVLAVFTSFE. Topologically, residues 70 to 141 are cytoplasmic; sequence KLQYLPIESN…WASNTVKKEK (72 aa).

This sequence belongs to the membrane magnesium transporter (TC 1.A.67) family. In terms of assembly, component of the ER membrane protein complex (EMC), which is composed of EMC1, EMC2, EMC3, EMC4, EMC5 and EMC6.

The protein resides in the endoplasmic reticulum membrane. Part of the endoplasmic reticulum membrane protein complex (EMC) that enables the energy-independent insertion into endoplasmic reticulum membranes of newly synthesized membrane proteins. Preferentially accommodates proteins with transmembrane domains that are weakly hydrophobic or contain destabilizing features such as charged and aromatic residues. Involved in the cotranslational insertion of multi-pass membrane proteins in which stop-transfer membrane-anchor sequences become ER membrane spanning helices. It is also required for the post-translational insertion of tail-anchored/TA proteins in endoplasmic reticulum membranes. By mediating the proper cotranslational insertion of N-terminal transmembrane domains in an N-exo topology, with translocated N-terminus in the lumen of the ER, controls the topology of multi-pass membrane proteins. The polypeptide is ER membrane protein complex subunit 5 (EMC5) (Saccharomyces cerevisiae (strain ATCC 204508 / S288c) (Baker's yeast)).